A 532-amino-acid chain; its full sequence is Glucose-6-phosphate isomerase (532 aa).

Catalysis depends on glutamate 330, which acts as the Proton donor. Residues histidine 359 and lysine 461 contribute to the active site.

It belongs to the GPI family.

Its subcellular location is the cytoplasm. It carries out the reaction alpha-D-glucose 6-phosphate = beta-D-fructose 6-phosphate. It functions in the pathway carbohydrate biosynthesis; gluconeogenesis. Its pathway is carbohydrate degradation; glycolysis; D-glyceraldehyde 3-phosphate and glycerone phosphate from D-glucose: step 2/4. Functionally, catalyzes the reversible isomerization of glucose-6-phosphate to fructose-6-phosphate. This is Glucose-6-phosphate isomerase from Synechococcus sp. (strain CC9605).